The sequence spans 172 residues: Adenine phosphoribosyltransferase (172 aa).

This sequence belongs to the purine/pyrimidine phosphoribosyltransferase family. As to quaternary structure, homodimer.

Its subcellular location is the cytoplasm. It carries out the reaction AMP + diphosphate = 5-phospho-alpha-D-ribose 1-diphosphate + adenine. It functions in the pathway purine metabolism; AMP biosynthesis via salvage pathway; AMP from adenine: step 1/1. Its function is as follows. Catalyzes a salvage reaction resulting in the formation of AMP, that is energically less costly than de novo synthesis. This chain is Adenine phosphoribosyltransferase, found in Trichormus variabilis (strain ATCC 29413 / PCC 7937) (Anabaena variabilis).